The chain runs to 227 residues: 6-phosphogluconolactonase (227 aa).

Belongs to the glucosamine/galactosamine-6-phosphate isomerase family. 6-phosphogluconolactonase subfamily.

It carries out the reaction 6-phospho-D-glucono-1,5-lactone + H2O = 6-phospho-D-gluconate + H(+). It participates in carbohydrate degradation; pentose phosphate pathway; D-ribulose 5-phosphate from D-glucose 6-phosphate (oxidative stage): step 2/3. In terms of biological role, hydrolysis of 6-phosphogluconolactone to 6-phosphogluconate. The protein is 6-phosphogluconolactonase (pgl) of Helicobacter pylori (strain J99 / ATCC 700824) (Campylobacter pylori J99).